Reading from the N-terminus, the 132-residue chain is Holo-[acyl-carrier-protein] synthase (132 aa).

Positions 8 and 62 each coordinate Mg(2+).

Belongs to the P-Pant transferase superfamily. AcpS family. Mg(2+) serves as cofactor.

The protein localises to the cytoplasm. It catalyses the reaction apo-[ACP] + CoA = holo-[ACP] + adenosine 3',5'-bisphosphate + H(+). In terms of biological role, transfers the 4'-phosphopantetheine moiety from coenzyme A to a Ser of acyl-carrier-protein. This chain is Holo-[acyl-carrier-protein] synthase, found in Methylibium petroleiphilum (strain ATCC BAA-1232 / LMG 22953 / PM1).